The primary structure comprises 299 residues: Bifunctional phosphoglucose/phosphomannose isomerase (299 aa).

One can recognise an SIS domain in the interval 27–177 (DEVEITPSSR…IHKLMEDFQK (151 aa)). Glycine 44, serine 45, serine 84, serine 86, threonine 89, and arginine 132 together coordinate D-fructose 6-phosphate. Catalysis depends on glutamate 200, which acts as the Proton acceptor. D-fructose 6-phosphate-binding residues include histidine 216 and lysine 295. Histidine 216 serves as the catalytic Proton donor. Lysine 295 acts as the Proton acceptor in catalysis.

It belongs to the PGI/PMI family. Homodimer.

It carries out the reaction alpha-D-glucose 6-phosphate = beta-D-fructose 6-phosphate. It catalyses the reaction D-mannose 6-phosphate = D-fructose 6-phosphate. With respect to regulation, presence or absence of metal ions or EDTA does not significantly affect the phosphoglucose isomerase activity. Dual specificity isomerase that catalyzes the isomerization of both glucose-6-phosphate and mannose-6-phosphate to fructose-6-phosphate with nearly similar catalytic efficiency. Also catalyzes the epimerization of mannose 6-phosphate to glucose 6-phosphate but the rate of epimerization reaction is 20-fold lower than that of isomerization reaction. The polypeptide is Bifunctional phosphoglucose/phosphomannose isomerase (Pyrobaculum calidifontis (strain DSM 21063 / JCM 11548 / VA1)).